A 238-amino-acid chain; its full sequence is Proenkephalin-A (238 aa).

Residues 1-25 (MAASALSTCLWMLVLGTCVSLVVGT) form the signal peptide. 3 disulfide bridges follow: Cys-27–Cys-50, Cys-31–Cys-54, and Cys-34–Cys-66. Residues 76–103 (QSPLASQQDQERVDAMMADEEDATSPEH) are disordered. Propeptides lie at residues 124-167 (SSAS…AEAV), 177-195 (ADRG…GRVL), and 206-230 (VGRP…SELQ).

This sequence belongs to the opioid neuropeptide precursor family. In terms of tissue distribution, expressed by the venom gland. Moderately expressed in the venom gland transcriptome.

It is found in the secreted. Its function is as follows. Met-enkephalins compete with and mimic the effects of opiate drugs. They play a role in a number of physiologic functions, including pain perception and responses to stress. Enkephalin peptides found in Meiacanthus fangblennies induce physiological effects via their interaction with delta-type opioid receptors (OPRD1) (tested on M.grammistes). Therefore, finding a proenkephalin sequence in M.atrodorsalis venom suggests that this protein act in the same manner. This Meiacanthus atrodorsalis (Forktail blenny) protein is Proenkephalin-A.